The sequence spans 907 residues: MNDCENFSPSPEFKWLCDELLGKIYETSSKKHLIGKPVTVRYLEIITNFIKLWRSTVGNYIYPALRLIVPFRDRRIYNVKENTLIKALCRYLRLPKSSETENRLLRWKQRAARGVKLSDFCVEEIRKRQKDYEGANRITIDELNGYLDEVSQEGNGKRMGYMALTDSRAFNYCLNHMTFMEMKFFFDIILKTRVLSGLENMFLTAWHPDATDYLSVVSDLDVLSQRLYNPNERLRQTDLSITISHAFEPQLAKRTHLSYERVASKLQHDFIIEEKMDGERLQIHYINYGEQIKYLSRRGVDFSYLYGENSSSGPISPSLKLHFNVKDCILDGEMITYDTEKDIVLPFGLVKSSAMNQIQSELAGIAPTESYKPLFVAFDLVYLNGKSLTNLALERRKDYLTKILTPVERSVEIIQYMKAINAEAIKDSLEQAISMGSEGIVLKHLHSKYFVGSRNTDWIKIKPEYLEQFGENMDLLIIGREQGKKDSFFCGLSISDPNEVAEKPRFISFCTIANGLSNEEFKDIERKTWGKWHIFSEDPPSPNLLGFGTKVPYEWIHPEDSVVLEVKARAIDTKESEKRKYRSGCTLHFGYCKQIRYDKDWKTVASFSEFEDMKDARNFYNKRKSHQVTDGKKRASKRAKIGIVNSSEPTALVAPVSNTFSNCRFRVISDYFDSTKRRRISQEDLCSVILEHGGEIVYTSDENNLPQDNLYIIGEKLTRECKILLNAKNLIIRPSWIFSCIEEGYKTPFTESDIFRGELESSMDCSQFYTDFNTASLNHLLETANRGIKNPDSDLLLPEVPLFLFSNLKLAVLNSENVLDTSILEVEFAIKCHGGELVHIENASIIIVFNDFISREDLFSLRQKIASKAVKESTESTPRIPRMVDISWALDSIKDNYIAETEHYQCL.

Residues glutamate 273, lysine 275, arginine 280, glutamate 333, phenylalanine 378, glutamate 438, lysine 443, lysine 460, and lysine 462 each contribute to the ATP site. Lysine 275 serves as the catalytic N6-AMP-lysine intermediate. Residue glutamate 333 coordinates Mg(2+). Residue glutamate 438 participates in Mg(2+) binding. 2 consecutive BRCT domains span residues 655–754 (PVSN…ESDI) and 800–906 (VPLF…HYQC).

The protein belongs to the ATP-dependent DNA ligase family. Mg(2+) is required as a cofactor.

The protein localises to the nucleus. It carries out the reaction ATP + (deoxyribonucleotide)n-3'-hydroxyl + 5'-phospho-(deoxyribonucleotide)m = (deoxyribonucleotide)n+m + AMP + diphosphate.. DNA ligase involved in DNA non-homologous end joining (NHEJ); required for double-strand break (DSB) repair. The polypeptide is DNA ligase 4 (LIG4) (Kluyveromyces lactis (strain ATCC 8585 / CBS 2359 / DSM 70799 / NBRC 1267 / NRRL Y-1140 / WM37) (Yeast)).